We begin with the raw amino-acid sequence, 397 residues long: Acetate kinase (397 aa).

Asn8 contributes to the Mg(2+) binding site. Lys15 contacts ATP. Arg92 provides a ligand contact to substrate. The active-site Proton donor/acceptor is Asp149. ATP contacts are provided by residues 209 to 213, 283 to 285, and 331 to 335; these read HLGNG, DFR, and GVGEN. A Mg(2+)-binding site is contributed by Glu385.

It belongs to the acetokinase family. Homodimer. Mg(2+) is required as a cofactor. Mn(2+) serves as cofactor.

It localises to the cytoplasm. The catalysed reaction is acetate + ATP = acetyl phosphate + ADP. The protein operates within metabolic intermediate biosynthesis; acetyl-CoA biosynthesis; acetyl-CoA from acetate: step 1/2. Catalyzes the formation of acetyl phosphate from acetate and ATP. Can also catalyze the reverse reaction. The sequence is that of Acetate kinase from Corynebacterium glutamicum (strain R).